A 340-amino-acid chain; its full sequence is Anthranilate phosphoribosyltransferase (340 aa).

Residues glycine 78, 81–82, threonine 86, 88–91, 106–114, and serine 118 contribute to the 5-phospho-alpha-D-ribose 1-diphosphate site; these read GD, NIST, and KHGNRSVSS. Position 78 (glycine 78) interacts with anthranilate. Serine 90 is a Mg(2+) binding site. Asparagine 109 contributes to the anthranilate binding site. Position 164 (arginine 164) interacts with anthranilate. 2 residues coordinate Mg(2+): aspartate 223 and glutamate 224.

Belongs to the anthranilate phosphoribosyltransferase family. In terms of assembly, homodimer. Requires Mg(2+) as cofactor.

It catalyses the reaction N-(5-phospho-beta-D-ribosyl)anthranilate + diphosphate = 5-phospho-alpha-D-ribose 1-diphosphate + anthranilate. It participates in amino-acid biosynthesis; L-tryptophan biosynthesis; L-tryptophan from chorismate: step 2/5. Functionally, catalyzes the transfer of the phosphoribosyl group of 5-phosphorylribose-1-pyrophosphate (PRPP) to anthranilate to yield N-(5'-phosphoribosyl)-anthranilate (PRA). The chain is Anthranilate phosphoribosyltransferase from Bacillus pumilus (strain SAFR-032).